We begin with the raw amino-acid sequence, 260 residues long: UPF0246 protein Bcep18194_A5551 (260 aa).

The protein belongs to the UPF0246 family.

The chain is UPF0246 protein Bcep18194_A5551 from Burkholderia lata (strain ATCC 17760 / DSM 23089 / LMG 22485 / NCIMB 9086 / R18194 / 383).